Here is a 37-residue protein sequence, read N- to C-terminus: Large ribosomal subunit protein bL36c (37 aa).

The protein belongs to the bacterial ribosomal protein bL36 family.

The protein resides in the plastid. It is found in the chloroplast. The polypeptide is Large ribosomal subunit protein bL36c (Dioscorea elephantipes (Elephant's foot yam)).